The chain runs to 672 residues: ABC transporter G family member 21 (672 aa).

Polar residues predominate over residues 1–35 (MMPPNEQESSFPKTPSANRHETSPVQENRFSSPSH). The disordered stretch occupies residues 1–59 (MMPPNEQESSFPKTPSANRHETSPVQENRFSSPSHVNPCLDDDNDHDGPSHQSRQSSVL). Residues 50 to 59 (SHQSRQSSVL) show a composition bias toward low complexity. The 255-residue stretch at 68-322 (LKFEELTYSI…FGSIGYQPGS (255 aa)) folds into the ABC transporter domain. 117 to 124 (GPSGSGKT) contributes to the ATP binding site. In terms of domain architecture, ABC transmembrane type-2 spans 411–617 (MQFSVLLKRG…CYKLLVGVQY (207 aa)). 6 helical membrane-spanning segments follow: residues 429 to 449 (FSGL…LLWW), 460 to 480 (VGLL…NAIF), 512 to 532 (LPME…MGGL), 543 to 563 (LMIV…LGAI), 576 to 596 (VLML…PGFI), and 649 to 669 (WDVL…YLAL).

Belongs to the ABC transporter superfamily. ABCG family. Eye pigment precursor importer (TC 3.A.1.204) subfamily.

It is found in the membrane. The sequence is that of ABC transporter G family member 21 (ABCG21) from Arabidopsis thaliana (Mouse-ear cress).